Here is a 273-residue protein sequence, read N- to C-terminus: Elongation factor Ts (273 aa).

The interval 79–82 (TDFV) is involved in Mg(2+) ion dislocation from EF-Tu.

The protein belongs to the EF-Ts family.

The protein resides in the cytoplasm. In terms of biological role, associates with the EF-Tu.GDP complex and induces the exchange of GDP to GTP. It remains bound to the aminoacyl-tRNA.EF-Tu.GTP complex up to the GTP hydrolysis stage on the ribosome. The sequence is that of Elongation factor Ts from Hydrogenobaculum sp. (strain Y04AAS1).